Reading from the N-terminus, the 413-residue chain is Glucose-1-phosphate adenylyltransferase (413 aa).

Alpha-D-glucose 1-phosphate-binding positions include Y102, G167, 182 to 183, and S200; that span reads EK.

This sequence belongs to the bacterial/plant glucose-1-phosphate adenylyltransferase family. As to quaternary structure, homotetramer.

It catalyses the reaction alpha-D-glucose 1-phosphate + ATP + H(+) = ADP-alpha-D-glucose + diphosphate. Its pathway is glycan biosynthesis; glycogen biosynthesis. In terms of biological role, involved in the biosynthesis of ADP-glucose, a building block required for the elongation reactions to produce glycogen. Catalyzes the reaction between ATP and alpha-D-glucose 1-phosphate (G1P) to produce pyrophosphate and ADP-Glc. In Deinococcus radiodurans (strain ATCC 13939 / DSM 20539 / JCM 16871 / CCUG 27074 / LMG 4051 / NBRC 15346 / NCIMB 9279 / VKM B-1422 / R1), this protein is Glucose-1-phosphate adenylyltransferase.